Here is a 551-residue protein sequence, read N- to C-terminus: Eukaryotic translation initiation factor 3 subunit D-2 (551 aa).

Residues 105 to 152 (NNVRARGRTGRGSQAVGGPGGPAAGGSTANSTKYGKGRNTRNTQNVGR) form a disordered region. Positions 119 to 128 (AVGGPGGPAA) are enriched in gly residues. Positions 290–304 (QFDLLTVNETSLEPP) are RNA gate.

The protein belongs to the eIF-3 subunit D family. In terms of assembly, component of the eukaryotic translation initiation factor 3 (eIF-3) complex. The eIF-3 complex interacts with pix.

Its subcellular location is the cytoplasm. In terms of biological role, mRNA cap-binding component of the eukaryotic translation initiation factor 3 (eIF-3) complex, which is involved in protein synthesis of a specialized repertoire of mRNAs and, together with other initiation factors, stimulates binding of mRNA and methionyl-tRNAi to the 40S ribosome. The eIF-3 complex specifically targets and initiates translation of a subset of mRNAs involved in cell proliferation. In the eIF-3 complex, eif3d specifically recognizes and binds the 7-methylguanosine cap of a subset of mRNAs. The sequence is that of Eukaryotic translation initiation factor 3 subunit D-2 from Drosophila erecta (Fruit fly).